A 140-amino-acid polypeptide reads, in one-letter code: Lysozyme D (140 aa).

Residues 1 to 18 (MKAFIVLVALACAAPAFG) form the signal peptide. A C-type lysozyme domain is found at 19-140 (RTMDRCSLAR…GWLPSIDDCF (122 aa)). 4 disulfides stabilise this stretch: Cys24-Cys139, Cys45-Cys129, Cys80-Cys96, and Cys92-Cys110. Residues Glu50 and Asp68 contribute to the active site.

This sequence belongs to the glycosyl hydrolase 22 family. Found in the midgut.

It catalyses the reaction Hydrolysis of (1-&gt;4)-beta-linkages between N-acetylmuramic acid and N-acetyl-D-glucosamine residues in a peptidoglycan and between N-acetyl-D-glucosamine residues in chitodextrins.. In terms of biological role, unlikely to play an active role in the humoral immune defense. May have a function in the digestion of bacteria in the food. The sequence is that of Lysozyme D (LysD) from Drosophila melanogaster (Fruit fly).